The primary structure comprises 179 residues: Protein GrpE (179 aa).

Residues 1–14 are compositionally biased toward basic and acidic residues; it reads MSKKDKKEEIKEEV. Residues 1–40 form a disordered region; sequence MSKKDKKEEIKEEVEATEPTTEESVEEVAEETSENKELQE. Acidic residues predominate over residues 15–32; it reads EATEPTTEESVEEVAEET.

This sequence belongs to the GrpE family. Homodimer.

It localises to the cytoplasm. In terms of biological role, participates actively in the response to hyperosmotic and heat shock by preventing the aggregation of stress-denatured proteins, in association with DnaK and GrpE. It is the nucleotide exchange factor for DnaK and may function as a thermosensor. Unfolded proteins bind initially to DnaJ; upon interaction with the DnaJ-bound protein, DnaK hydrolyzes its bound ATP, resulting in the formation of a stable complex. GrpE releases ADP from DnaK; ATP binding to DnaK triggers the release of the substrate protein, thus completing the reaction cycle. Several rounds of ATP-dependent interactions between DnaJ, DnaK and GrpE are required for fully efficient folding. In Streptococcus mutans serotype c (strain ATCC 700610 / UA159), this protein is Protein GrpE.